A 105-amino-acid polypeptide reads, in one-letter code: V-type ATP synthase subunit F (105 aa).

It belongs to the V-ATPase F subunit family.

Its function is as follows. Produces ATP from ADP in the presence of a proton gradient across the membrane. This chain is V-type ATP synthase subunit F, found in Fusobacterium nucleatum subsp. nucleatum (strain ATCC 25586 / DSM 15643 / BCRC 10681 / CIP 101130 / JCM 8532 / KCTC 2640 / LMG 13131 / VPI 4355).